Consider the following 888-residue polypeptide: DNA mismatch repair protein MutS (888 aa).

The segment at 249–271 (IGQRPPLSPPSREASGSTMAIDP) is disordered. 638-645 (GPNMAGKS) contacts ATP.

It belongs to the DNA mismatch repair MutS family.

In terms of biological role, this protein is involved in the repair of mismatches in DNA. It is possible that it carries out the mismatch recognition step. This protein has a weak ATPase activity. This Nitrobacter winogradskyi (strain ATCC 25391 / DSM 10237 / CIP 104748 / NCIMB 11846 / Nb-255) protein is DNA mismatch repair protein MutS.